The following is a 529-amino-acid chain: Probable biotin-dependent acyl-coenzyme A carboxylase beta2 subunit (529 aa).

Residues methionine 20–valine 271 form the CoA carboxyltransferase N-terminal domain. The CoA carboxyltransferase C-terminal domain occupies proline 270–glycine 520.

Belongs to the AccD/PCCB family. The biotin-dependent acyl-CoA carboxylase complex is composed of an AccA protein, which contains the biotin carboxylase (BC) and biotin carboxyl carrier protein (BCCP) domains, and an AccD protein, which contains the carboxyl transferase (CT) domain.

Component of a biotin-dependent acyl-CoA carboxylase complex. This subunit transfers the CO2 from carboxybiotin to the CoA ester substrate. The chain is Probable biotin-dependent acyl-coenzyme A carboxylase beta2 subunit (accD2) from Mycobacterium tuberculosis (strain ATCC 25618 / H37Rv).